A 103-amino-acid chain; its full sequence is Large ribosomal subunit protein bL21 (103 aa).

The protein belongs to the bacterial ribosomal protein bL21 family. In terms of assembly, part of the 50S ribosomal subunit. Contacts protein L20.

Its function is as follows. This protein binds to 23S rRNA in the presence of protein L20. In Clostridium botulinum (strain Alaska E43 / Type E3), this protein is Large ribosomal subunit protein bL21.